The chain runs to 340 residues: Methionine import ATP-binding protein MetN 2 (340 aa).

The ABC transporter domain maps to 2–241; the sequence is ITLQNVVKEY…PQEKVTQRFV (240 aa). 38 to 45 serves as a coordination point for ATP; that stretch reads GYSGAGKS.

The protein belongs to the ABC transporter superfamily. Methionine importer (TC 3.A.1.24) family. In terms of assembly, the complex is composed of two ATP-binding proteins (MetN), two transmembrane proteins (MetI) and a solute-binding protein (MetQ).

The protein localises to the cell membrane. It carries out the reaction L-methionine(out) + ATP + H2O = L-methionine(in) + ADP + phosphate + H(+). The enzyme catalyses D-methionine(out) + ATP + H2O = D-methionine(in) + ADP + phosphate + H(+). Functionally, part of the ABC transporter complex MetNIQ involved in methionine import. Responsible for energy coupling to the transport system. This chain is Methionine import ATP-binding protein MetN 2, found in Listeria monocytogenes serovar 1/2a (strain ATCC BAA-679 / EGD-e).